The sequence spans 179 residues: Insulin-like growth factor 2 (179 aa).

The signal sequence occupies residues M1–A24. A b region spans residues A25–F52. 3 cysteine pairs are disulfide-bonded: C33–C71, C45–C84, and C70–C75. The interval S53–R64 is c. The tract at residues G65–A85 is a. Positions T86–E91 are d. Residues R92–D179 constitute a propeptide, e peptide. An O-linked (GalNAc...) threonine glycan is attached at T106. Residue S154 is glycosylated (O-linked (GalNAc...) serine). The interval A160–D179 is disordered. A glycan (O-linked (GalNAc...) threonine) is linked at T163.

The protein belongs to the insulin family. In terms of assembly, interacts with MYORG; this interaction is required for IGF2 secretion. Interacts with integrins ITGAV:ITGB3 and ITGA6:ITGB4; integrin-binding is required for IGF2 signaling. Interacts with IGFBP2. Proteolytically processed by PCSK4, proIGF2 is cleaved at Arg-128 and Arg-92 to generate big-IGF2 and mature IGF2.

It is found in the secreted. Functionally, the insulin-like growth factors possess growth-promoting activity. Major fetal growth hormone in mammals. Plays a key role in regulating fetoplacental development. IGF2 is influenced by placental lactogen. Also involved in tissue differentiation. In adults, involved in glucose metabolism in adipose tissue, skeletal muscle and liver. Acts as a ligand for integrin which is required for IGF2 signaling. Positively regulates myogenic transcription factor MYOD1 function by facilitating the recruitment of transcriptional coactivators, thereby controlling muscle terminal differentiation. Inhibits myoblast differentiation and modulates metabolism via increasing the mitochondrial respiration rate. Its function is as follows. Preptin undergoes glucose-mediated co-secretion with insulin, and acts as a physiological amplifier of glucose-mediated insulin secretion. Exhibits osteogenic properties by increasing osteoblast mitogenic activity through phosphoactivation of MAPK1 and MAPK3. The chain is Insulin-like growth factor 2 from Bos taurus (Bovine).